Here is a 257-residue protein sequence, read N- to C-terminus: Thiazole synthase (257 aa).

Lysine 96 serves as the catalytic Schiff-base intermediate with DXP. 1-deoxy-D-xylulose 5-phosphate contacts are provided by residues glycine 157, 184 to 185, and 206 to 207; these read AG and NT.

The protein belongs to the ThiG family. In terms of assembly, homotetramer. Forms heterodimers with either ThiH or ThiS.

Its subcellular location is the cytoplasm. It catalyses the reaction [ThiS sulfur-carrier protein]-C-terminal-Gly-aminoethanethioate + 2-iminoacetate + 1-deoxy-D-xylulose 5-phosphate = [ThiS sulfur-carrier protein]-C-terminal Gly-Gly + 2-[(2R,5Z)-2-carboxy-4-methylthiazol-5(2H)-ylidene]ethyl phosphate + 2 H2O + H(+). It functions in the pathway cofactor biosynthesis; thiamine diphosphate biosynthesis. Catalyzes the rearrangement of 1-deoxy-D-xylulose 5-phosphate (DXP) to produce the thiazole phosphate moiety of thiamine. Sulfur is provided by the thiocarboxylate moiety of the carrier protein ThiS. In vitro, sulfur can be provided by H(2)S. This Rhizobium rhizogenes (strain K84 / ATCC BAA-868) (Agrobacterium radiobacter) protein is Thiazole synthase.